We begin with the raw amino-acid sequence, 263 residues long: Pheophorbidase (263 aa).

The AB hydrolase-1 domain maps to 13–244 (HFVFVHGASH…LEESDHSAFF (232 aa)). The active-site Acyl-ester intermediate is the Ser-88. Residues Asp-212 and His-240 each act as charge relay system in the active site.

Belongs to the AB hydrolase superfamily. Homodimer.

Its subcellular location is the cytoplasm. The catalysed reaction is pheophorbide a + H2O + H(+) = pyropheophorbide a + methanol + CO2. Inhibited by methanol and phenylmethylsulfonicfluoride (PMSF). Its function is as follows. Involved in chlorophyll degradation. Specific for the pheophorbides of the dihydroporphyrin and tetrahydroporphyrin types. Chlorophyllide a, pheophytin a and the nonfluorescent chlorophyll catabolite (NCC) are not used as substrates. This is Pheophorbidase (PPD) from Raphanus sativus (Radish).